The sequence spans 388 residues: MPLSDAMPALLVLADGTAYRGWSFGATGTTIGEVVFNTGMTGYQEVLTDPSYRGQIVVFTYPELGNTGVNPEDEESARPQVRGAIARNICHKPSNWRSTQSLPDYLKQHHIPGIFGIDTRALTRKIRMYGAMNGGISTEILDEAELLEQVQAAPNMAGLNLVREVTTSTVYEWSDPTTAVWEFNPDGTVKNGESLTVVALDFGVKRNILRRLASYGCRVIVVPADTSPEEILKYNPDGIFLSNGPGDPSAVTEGITTAKALLESEKPIFGICMGHQILGHALGAETFKLKFGHRGLNQPAGLTQRVEITSQNHSFAIDPDSLPEAVVEISHLNLNDRTVAGLRHKSLPIFSVQYHPEASPGPHDADYLFAQFVHQMRTTKQATTAEVS.

A CPSase region spans residues 1 to 192; that stretch reads MPLSDAMPAL…FNPDGTVKNG (192 aa). Positions 51, 244, and 246 each coordinate L-glutamine. One can recognise a Glutamine amidotransferase type-1 domain in the interval 196–382; it reads TVVALDFGVK…VHQMRTTKQA (187 aa). C272 serves as the catalytic Nucleophile. 4 residues coordinate L-glutamine: M273, Q276, N312, and F315. Catalysis depends on residues H355 and E357.

It belongs to the CarA family. Composed of two chains; the small (or glutamine) chain promotes the hydrolysis of glutamine to ammonia, which is used by the large (or ammonia) chain to synthesize carbamoyl phosphate. Tetramer of heterodimers (alpha,beta)4.

The catalysed reaction is hydrogencarbonate + L-glutamine + 2 ATP + H2O = carbamoyl phosphate + L-glutamate + 2 ADP + phosphate + 2 H(+). It catalyses the reaction L-glutamine + H2O = L-glutamate + NH4(+). Its pathway is amino-acid biosynthesis; L-arginine biosynthesis; carbamoyl phosphate from bicarbonate: step 1/1. It participates in pyrimidine metabolism; UMP biosynthesis via de novo pathway; (S)-dihydroorotate from bicarbonate: step 1/3. Functionally, small subunit of the glutamine-dependent carbamoyl phosphate synthetase (CPSase). CPSase catalyzes the formation of carbamoyl phosphate from the ammonia moiety of glutamine, carbonate, and phosphate donated by ATP, constituting the first step of 2 biosynthetic pathways, one leading to arginine and/or urea and the other to pyrimidine nucleotides. The small subunit (glutamine amidotransferase) binds and cleaves glutamine to supply the large subunit with the substrate ammonia. In Nostoc sp. (strain PCC 7120 / SAG 25.82 / UTEX 2576), this protein is Carbamoyl phosphate synthase small chain.